A 122-amino-acid polypeptide reads, in one-letter code: Large ribosomal subunit protein uL14 (122 aa).

This sequence belongs to the universal ribosomal protein uL14 family. As to quaternary structure, part of the 50S ribosomal subunit. Forms a cluster with proteins L3 and L19. In the 70S ribosome, L14 and L19 interact and together make contacts with the 16S rRNA in bridges B5 and B8.

Its function is as follows. Binds to 23S rRNA. Forms part of two intersubunit bridges in the 70S ribosome. This Nostoc punctiforme (strain ATCC 29133 / PCC 73102) protein is Large ribosomal subunit protein uL14.